Consider the following 168-residue polypeptide: Chemoreceptor glutamine deamidase CheD (168 aa).

It belongs to the CheD family. As to quaternary structure, forms a complex with CheC.

It carries out the reaction L-glutaminyl-[protein] + H2O = L-glutamyl-[protein] + NH4(+). Deamidates glutamine residues to glutamate on methyl-accepting chemotaxis receptors (MCPs). CheD-mediated MCP deamidation is required for productive communication of the conformational signals of the chemoreceptors to the CheA kinase. The protein is Chemoreceptor glutamine deamidase CheD of Bacillus licheniformis (strain ATCC 14580 / DSM 13 / JCM 2505 / CCUG 7422 / NBRC 12200 / NCIMB 9375 / NCTC 10341 / NRRL NRS-1264 / Gibson 46).